The following is a 584-amino-acid chain: uncharacterized protein (584 aa).

The helical transmembrane segment at 15 to 35 threads the bilayer; sequence FIFFVLVFFICIIFGCIYESL. 2 stretches are compositionally biased toward polar residues: residues 184-194 and 204-225; these read DVSTENSYTHN and GKRTYNNQSNNNLPYDNSSYNI. Positions 184 to 226 are disordered; that stretch reads DVSTENSYTHNNSRDDEPQNGKRTYNNQSNNNLPYDNSSYNIS. Coiled-coil stretches lie at residues 267-319 and 436-477; these read DNYP…DNYP and RDNH…HYKR.

It localises to the membrane. This is an uncharacterized protein from Plasmodium falciparum (isolate 3D7).